The primary structure comprises 473 residues: Bifunctional protein HldE (473 aa).

A ribokinase region spans residues 1–317 (MTHGLPHFTS…LQQALHPRAI (317 aa)). Position 195–198 (195–198 (NLAE)) interacts with ATP. D264 is a catalytic residue. The interval 343–473 (MTNGCFDILH…SQIIDIIRKN (131 aa)) is cytidylyltransferase.

The protein in the N-terminal section; belongs to the carbohydrate kinase PfkB family. It in the C-terminal section; belongs to the cytidylyltransferase family. In terms of assembly, homodimer.

It carries out the reaction D-glycero-beta-D-manno-heptose 7-phosphate + ATP = D-glycero-beta-D-manno-heptose 1,7-bisphosphate + ADP + H(+). The enzyme catalyses D-glycero-beta-D-manno-heptose 1-phosphate + ATP + H(+) = ADP-D-glycero-beta-D-manno-heptose + diphosphate. It participates in nucleotide-sugar biosynthesis; ADP-L-glycero-beta-D-manno-heptose biosynthesis; ADP-L-glycero-beta-D-manno-heptose from D-glycero-beta-D-manno-heptose 7-phosphate: step 1/4. It functions in the pathway nucleotide-sugar biosynthesis; ADP-L-glycero-beta-D-manno-heptose biosynthesis; ADP-L-glycero-beta-D-manno-heptose from D-glycero-beta-D-manno-heptose 7-phosphate: step 3/4. Its function is as follows. Catalyzes the phosphorylation of D-glycero-D-manno-heptose 7-phosphate at the C-1 position to selectively form D-glycero-beta-D-manno-heptose-1,7-bisphosphate. In terms of biological role, catalyzes the ADP transfer from ATP to D-glycero-beta-D-manno-heptose 1-phosphate, yielding ADP-D-glycero-beta-D-manno-heptose. The sequence is that of Bifunctional protein HldE from Nitrosococcus oceani (strain ATCC 19707 / BCRC 17464 / JCM 30415 / NCIMB 11848 / C-107).